We begin with the raw amino-acid sequence, 590 residues long: Potassium-transporting ATPase potassium-binding subunit (590 aa).

10 helical membrane passes run 11–31 (IFIA…AAVF), 64–84 (TAYC…TYLI), 136–156 (GLAT…IAFI), 178–198 (ILWV…SQGV), 273–293 (MLEM…LGQM), 301–321 (WAVL…CYWA), 403–423 (AGLY…GLMV), 442–462 (AMLY…VAVL), 511–531 (LGFA…ALAG), and 552–572 (LFTV…FLPA).

The protein belongs to the KdpA family. The system is composed of three essential subunits: KdpA, KdpB and KdpC.

It localises to the cell inner membrane. Its function is as follows. Part of the high-affinity ATP-driven potassium transport (or Kdp) system, which catalyzes the hydrolysis of ATP coupled with the electrogenic transport of potassium into the cytoplasm. This subunit binds the periplasmic potassium ions and delivers the ions to the membrane domain of KdpB through an intramembrane tunnel. This chain is Potassium-transporting ATPase potassium-binding subunit, found in Acidobacterium capsulatum (strain ATCC 51196 / DSM 11244 / BCRC 80197 / JCM 7670 / NBRC 15755 / NCIMB 13165 / 161).